The primary structure comprises 196 residues: Imidazoleglycerol-phosphate dehydratase (196 aa).

This sequence belongs to the imidazoleglycerol-phosphate dehydratase family.

It is found in the cytoplasm. It catalyses the reaction D-erythro-1-(imidazol-4-yl)glycerol 3-phosphate = 3-(imidazol-4-yl)-2-oxopropyl phosphate + H2O. It participates in amino-acid biosynthesis; L-histidine biosynthesis; L-histidine from 5-phospho-alpha-D-ribose 1-diphosphate: step 6/9. This is Imidazoleglycerol-phosphate dehydratase from Clostridium botulinum (strain Okra / Type B1).